The primary structure comprises 694 residues: Putative serine/threonine-protein kinase R679 (694 aa).

A Protein kinase domain is found at 167 to 548 (ITKNKTVGKG…ITNILKHLFT (382 aa)). Residues 173-181 (VGKGAAGIA) and Lys196 contribute to the ATP site. Asp395 acts as the Proton acceptor in catalysis.

The protein belongs to the protein kinase superfamily. Ser/Thr protein kinase family.

The protein localises to the virion. The catalysed reaction is L-seryl-[protein] + ATP = O-phospho-L-seryl-[protein] + ADP + H(+). The enzyme catalyses L-threonyl-[protein] + ATP = O-phospho-L-threonyl-[protein] + ADP + H(+). In Acanthamoeba polyphaga (Amoeba), this protein is Putative serine/threonine-protein kinase R679.